The primary structure comprises 133 residues: Ribonuclease VapC1 (133 aa).

Residues aspartate 7 and aspartate 98 each coordinate Mg(2+).

This sequence belongs to the PINc/VapC protein family. It depends on Mg(2+) as a cofactor.

In terms of biological role, toxic component of a type II toxin-antitoxin (TA) system. The cognate antitoxin is VapB1. The sequence is that of Ribonuclease VapC1 from Mycobacterium tuberculosis (strain CDC 1551 / Oshkosh).